Here is a 564-residue protein sequence, read N- to C-terminus: Beta-N-acetylglucosaminidase/beta-glucosidase (564 aa).

D283 serves as the catalytic Nucleophile.

The protein belongs to the glycosyl hydrolase 3 family.

It catalyses the reaction Hydrolysis of terminal non-reducing N-acetyl-D-hexosamine residues in N-acetyl-beta-D-hexosaminides.. It carries out the reaction Hydrolysis of terminal, non-reducing beta-D-glucosyl residues with release of beta-D-glucose.. Functionally, catalyzes the cleavage of beta-N-acetyl-D-glucosaminides and beta-D-glucosides. Might be involved in the degradation of glucuronic acid-containing glycosaminoglycans such as hyaluronic acid. This chain is Beta-N-acetylglucosaminidase/beta-glucosidase (nag3), found in Cellulomonas fimi.